The following is a 193-amino-acid chain: Orotate phosphoribosyltransferase (193 aa).

Residues R107, K108, K111, H113, and 133-141 (EDVITSGGS) each bind 5-phospho-alpha-D-ribose 1-diphosphate. Orotate is bound by residues T137 and R165.

Belongs to the purine/pyrimidine phosphoribosyltransferase family. PyrE subfamily. In terms of assembly, homodimer. Mg(2+) is required as a cofactor.

The catalysed reaction is orotidine 5'-phosphate + diphosphate = orotate + 5-phospho-alpha-D-ribose 1-diphosphate. The protein operates within pyrimidine metabolism; UMP biosynthesis via de novo pathway; UMP from orotate: step 1/2. Its function is as follows. Catalyzes the transfer of a ribosyl phosphate group from 5-phosphoribose 1-diphosphate to orotate, leading to the formation of orotidine monophosphate (OMP). This Rhodopirellula baltica (strain DSM 10527 / NCIMB 13988 / SH1) protein is Orotate phosphoribosyltransferase.